Consider the following 315-residue polypeptide: 4-diphosphocytidyl-2-C-methyl-D-erythritol kinase (315 aa).

Residue Lys11 is part of the active site. Position 99 to 109 (99 to 109 (PMAAGLAGGSA)) interacts with ATP. The active site involves Asp141.

Belongs to the GHMP kinase family. IspE subfamily.

It carries out the reaction 4-CDP-2-C-methyl-D-erythritol + ATP = 4-CDP-2-C-methyl-D-erythritol 2-phosphate + ADP + H(+). It participates in isoprenoid biosynthesis; isopentenyl diphosphate biosynthesis via DXP pathway; isopentenyl diphosphate from 1-deoxy-D-xylulose 5-phosphate: step 3/6. In terms of biological role, catalyzes the phosphorylation of the position 2 hydroxy group of 4-diphosphocytidyl-2C-methyl-D-erythritol. This Synechocystis sp. (strain ATCC 27184 / PCC 6803 / Kazusa) protein is 4-diphosphocytidyl-2-C-methyl-D-erythritol kinase.